We begin with the raw amino-acid sequence, 173 residues long: Pyridoxal 5'-phosphate synthase subunit PdxT (173 aa).

49-51 (GES) lines the L-glutamine pocket. Cys-81 acts as the Nucleophile in catalysis. L-glutamine is bound by residues Arg-113 and 141-142 (IR).

This sequence belongs to the glutaminase PdxT/SNO family. In terms of assembly, in the presence of PdxS, forms a dodecamer of heterodimers. Only shows activity in the heterodimer.

The enzyme catalyses aldehydo-D-ribose 5-phosphate + D-glyceraldehyde 3-phosphate + L-glutamine = pyridoxal 5'-phosphate + L-glutamate + phosphate + 3 H2O + H(+). It catalyses the reaction L-glutamine + H2O = L-glutamate + NH4(+). Its pathway is cofactor biosynthesis; pyridoxal 5'-phosphate biosynthesis. Functionally, catalyzes the hydrolysis of glutamine to glutamate and ammonia as part of the biosynthesis of pyridoxal 5'-phosphate. The resulting ammonia molecule is channeled to the active site of PdxS. The polypeptide is Pyridoxal 5'-phosphate synthase subunit PdxT (Mycolicibacterium paratuberculosis (strain ATCC BAA-968 / K-10) (Mycobacterium paratuberculosis)).